The sequence spans 810 residues: MEHKEVVLLLLLFLKSGQGEPLDDYVNTQGASLFSVTKKQLGAGSIEECAAKCEEDEEFTCRAFQYHSKEQQCVIMAENRKSSIIIRMRDVVLFEKKVYLSECKTGNGKNYRGTMSKTKNGITCQKWSSTSPHRPRFSPATHPSEGLEENYCRNPDNDPQGPWCYTTDPEKRYDYCDILECEEECMHCSGENYDGKISKTMSGLECQAWDSQSPHAHGYIPSKFPNKNLKKNYCRNPDRELRPWCFTTDPNKRWELCDIPRCTTPPPSSGPTYQCLKGTGENYRGNVAVTVSGHTCQHWSAQTPHTHNRTPENFPCKNLDENYCRNPDGKRAPWCHTTNSQVRWEYCKIPSCDSSPVSTEQLAPTAPPELTPVVQDCYHGDGQSYRGTSSTTTTGKKCQSWSSMTPHRHQKTPENYPNAGLTMNYCRNPDADKGPWCFTTDPSVRWEYCNLKKCSGTEASVVAPPPVVLLPDVETPSEEDCMFGNGKGYRGKRATTVTGTPCQDWAAQEPHRHSIFTPETNPRAGLEKNYCRNPDGDVGGPWCYTTNPRKLYDYCDVPQCAAPSFDCGKPQVEPKKCPGRVVGGCVAHPHSWPWQVSLRTRFGMHFCGGTLISPEWVLTAAHCLEKSPRPSSYKVILGAHQEVNLEPHVQEIEVSRLFLEPTRKDIALLKLSSPAVITDKVIPACLPSPNYVVADRTECFITGWGETQGTFGAGLLKEAQLPVIENKVCNRYEFLNGRVQSTELCAGHLAGGTDSCQGDSGGPLVCFEKDKYILQGVTSWGLGCARPNKPGVYVRVSRFVTWIEGVMRNN.

The signal sequence occupies residues 1–19 (MEHKEVVLLLLLFLKSGQG). The PAN domain occupies 20–98 (EPLDDYVNTQ…RDVVLFEKKV (79 aa)). 12 disulfide bridges follow: Cys49–Cys73, Cys53–Cys61, Cys103–Cys181, Cys124–Cys164, Cys152–Cys176, Cys185–Cys262, Cys188–Cys316, Cys206–Cys245, Cys234–Cys257, Cys275–Cys352, Cys296–Cys335, and Cys324–Cys347. Kringle domains lie at 103–181 (CKTG…ILEC) and 184–262 (ECMH…IPRC). Positions 126–145 (KWSSTSPHRPRFSPATHPSE) are disordered. Residues Arg136, Asp158, and Arg172 each contribute to the L-lysine site. O-linked (GalNAc...) serine glycosylation occurs at Ser268. In terms of domain architecture, Kringle 3 spans 275–352 (CLKGTGENYR…RWEYCKIPSC (78 aa)). N-linked (GlcNAc...) asparagine glycosylation occurs at Asn308. Thr365 is a glycosylation site (O-linked (GalNAc...) threonine). 9 disulfides stabilise this stretch: Cys377–Cys454, Cys398–Cys437, Cys426–Cys449, Cys481–Cys560, Cys502–Cys543, Cys531–Cys555, Cys567–Cys685, Cys577–Cys585, and Cys607–Cys623. 2 Kringle domains span residues 377–454 (CYHG…LKKC) and 481–560 (CMFG…VPQC). Residues 396–416 (KKCQSWSSMTPHRHQKTPENY) are disordered. Residues Asp432 and Arg445 each contribute to the L-lysine site. One can recognise a Peptidase S1 domain in the interval 581–808 (VVGGCVAHPH…FVTWIEGVMR (228 aa)). Ser597 bears the Phosphoserine mark. Residues His622 and Asp665 each act as charge relay system in the active site. Phosphoserine is present on Ser688. 3 cysteine pairs are disulfide-bonded: Cys699/Cys766, Cys729/Cys745, and Cys756/Cys784. The active-site Charge relay system is the Ser760.

The protein belongs to the peptidase S1 family. Plasminogen subfamily. In terms of assembly, interacts (both mature PLG and the angiostatin peptide) with CSPG4 and AMOT. Interacts (via the Kringle domains) with HRG; the interaction tethers PLG to the cell surface and enhances its activation. Interacts (via Kringle 4 domain) with ADA; the interaction stimulates PLG activation when in complex with DPP4. Angiostatin: Interacts with ATP5F1A; the interaction inhibits most of the angiogenic effects of angiostatin. Interacts (plasmin) with iripin-8, a serine protease inhibitor from Ixodes ricinus saliva. Interacts (plasmin) with iripin-1, a serine protease inhibitor from Ixodes ricinus saliva. Interacts (plasmin) with Kazal-type trypsin inhibitor, a serine protease inhibitor from Aedes aegypti. (Microbial infection) Interacts with C.albicans GPD2; the interaction is direct and provides active plasmin on the surface of fungal cells. As to quaternary structure, (Microbial infection) Interacts with Staphylococcus aureus protein FnbB; this interaction provides active plasmin on the surface of bacterial cells. In terms of assembly, (Microbial infection) Interacts with P.falciparum (strain NF54) enolase ENO (via DKSLVK motif); the interaction occurs at the ookinete cell surface and is required for ookinete invasion of the mosquito midgut. (Microbial infection) Interacts with B.burgdorferi OspC. N-linked glycan contains N-acetyllactosamine and sialic acid. O-linked glycans consist of Gal-GalNAc disaccharide modified with up to 2 sialic acid residues (microheterogeneity). In terms of processing, in the presence of the inhibitor, the activation involves only cleavage after Arg-580, yielding two chains held together by two disulfide bonds. In the absence of the inhibitor, the activation involves additionally the removal of the activation peptide. Post-translationally, (Microbial infection) The Y.pestis Pla protein cleaves between Arg-580 and Val-581, generating plasmin which facilitates bacterial migration and infection. In terms of tissue distribution, present in plasma and many other extracellular fluids. It is synthesized in the liver.

It localises to the secreted. It catalyses the reaction Preferential cleavage: Lys-|-Xaa &gt; Arg-|-Xaa, higher selectivity than trypsin. Converts fibrin into soluble products.. With respect to regulation, converted into plasmin by plasminogen activators, both plasminogen and its activator being bound to fibrin. Activated with catalytic amounts of streptokinase. Plasmin activity inhibited by SERPINE2. Functionally, plasmin dissolves the fibrin of blood clots and acts as a proteolytic factor in a variety of other processes including embryonic development, tissue remodeling, tumor invasion, and inflammation. In ovulation, weakens the walls of the Graafian follicle. It activates the urokinase-type plasminogen activator, collagenases and several complement zymogens, such as C1, C4 and C5. Cleavage of fibronectin and laminin leads to cell detachment and apoptosis. Also cleaves fibrin, thrombospondin and von Willebrand factor. Its role in tissue remodeling and tumor invasion may be modulated by CSPG4. Binds to cells. In terms of biological role, angiostatin is an angiogenesis inhibitor that blocks neovascularization and growth of experimental primary and metastatic tumors in vivo. (Microbial infection) ENO/enoloase from parasite P.falciparum (strain NF54) interacts with PLG present in the mosquito blood meal to promote the invasion of the mosquito midgut by the parasite ookinete. The catalytic active form, plasmin, is essential for the invasion of the mosquito midgut. Its function is as follows. (Microbial infection) Binds to OspC on the surface of B.burgdorferi cells, possibly conferring an extracellular protease activity on the bacteria that allows it to traverse host tissue. Functionally, (Microbial infection) Interacts with dengue virus type 2 particles. Enhances dengue virus type 2 infection in Aedes aegypti mosquito midgut by increasing midgut internalization, resulting in higher infection rates and viral dissemination in mosquitoes. In Homo sapiens (Human), this protein is Plasminogen (PLG).